Consider the following 483-residue polypeptide: UDP-glycosyltransferase 85C1 (483 aa).

Residues Ser304, 360–361 (WC), 378–386 (HCGWGSIIE), and 400–403 (IGDQ) each bind UDP-alpha-D-glucose.

It belongs to the UDP-glycosyltransferase family.

Its function is as follows. May glycosylate diterpenes or flavonols in leaves. This Stevia rebaudiana (Stevia) protein is UDP-glycosyltransferase 85C1.